Here is a 405-residue protein sequence, read N- to C-terminus: MTNIREDENIFMFLCEKWILINKNHIWNRINQRINIIADFDRYQRARTISEGQRTENIHRNIYGAVPYDYNLVNLTSTQRNPLGYINASVAEFPEIGRHYIITGAAQDTQIPFFWQMVFEQKSPAIVMLLEDVELGIEKSDKYFPNNTREELKFGIYDITCKEFVKRNILEYRLLEVSVGNETHQVHHYKFHGWTEFNLPKYEDFMAFYNTMKEVGVPLLAVMKNNCMSSFFKKYHHTPPTNAPIIQCSTGGARCGVFIIIDILINLIDNRIKNSYSIEWWMLKVRSKRNHSALTNQQHSFIYDIIIKYIRTRHNQLRHLEKYLEAHANTVRMIDSTNTEDVDKFIKPRDWIVDFDERDRLIGKLQFRKRLKIEKDQVSEQKLVHLKSQLHLFQDTYKYESYVLQ.

A Tyrosine-protein phosphatase domain is found at 30–309 (INQRINIIAD…SFIYDIIIKY (280 aa)). Cys248 acts as the Phosphocysteine intermediate in catalysis.

Belongs to the protein-tyrosine phosphatase family. As to expression, expressed in the 2 embryonic head hypodermal cells XXXL/R.

It is found in the cytoplasm. The protein resides in the cell membrane. It carries out the reaction O-phospho-L-tyrosyl-[protein] + H2O = L-tyrosyl-[protein] + phosphate. Functionally, putative phosphatase which, together with eak-4 and sdf-9, negatively regulates dauer larva formation downstream of insulin-like receptor daf-2 and in parallel of age-1, pdk-1 and akt-1. The protein is Tyrosine-protein phosphatase non-receptor type eak-6 of Caenorhabditis elegans.